Here is a 1263-residue protein sequence, read N- to C-terminus: Valine--tRNA ligase (1263 aa).

Position 2 is an N-acetylserine (S2). A GST C-terminal domain is found at 89–219; that stretch reads GSRAAVLVQQ…YSGARSVTQQ (131 aa). Residues 218–294 are disordered; that stretch reads QQPGSEVIAP…PGEKKDVSGA (77 aa). Basic and acidic residues-rich tracts occupy residues 234-248 and 259-274; these read LKKE…EKFQ and HGEK…KRDP. The short motif at 343-353 is the 'HIGH' region element; the sequence is PNVTGSLHLGH. Phosphoserine is present on residues S436 and S526. At K644 the chain carries N6-acetyllysine. The 'KMSKS' region motif lies at 861-865; sequence KMSKS. K864 lines the ATP pocket.

The protein belongs to the class-I aminoacyl-tRNA synthetase family. As to quaternary structure, forms high-molecular-mass aggregates with elongation factor 1.

It carries out the reaction tRNA(Val) + L-valine + ATP = L-valyl-tRNA(Val) + AMP + diphosphate. Its activity is regulated as follows. Can be regulated by protein kinase C-dependent phosphorylation. The chain is Valine--tRNA ligase (Vars1) from Mus musculus (Mouse).